A 78-amino-acid polypeptide reads, in one-letter code: MALFEDIQAVITEQLNVDAAQVTLEAEFVKDLGADSLDVVELIMALEEKFGIEIPDEQAEKIVNVGDVVKYIEDNKLA.

Positions 1–76 (MALFEDIQAV…DVVKYIEDNK (76 aa)) constitute a Carrier domain. O-(pantetheine 4'-phosphoryl)serine is present on serine 36.

It belongs to the acyl carrier protein (ACP) family. 4'-phosphopantetheine is transferred from CoA to a specific serine of apo-ACP by AcpS. This modification is essential for activity because fatty acids are bound in thioester linkage to the sulfhydryl of the prosthetic group.

It is found in the cytoplasm. It participates in lipid metabolism; fatty acid biosynthesis. Functionally, carrier of the growing fatty acid chain in fatty acid biosynthesis. In Helicobacter acinonychis (strain Sheeba), this protein is Acyl carrier protein.